Consider the following 49-residue polypeptide: Delta-actitoxin-Axm1h (49 aa).

Cystine bridges form between C4-C46, C6-C36, and C29-C47.

The protein belongs to the sea anemone sodium channel inhibitory toxin family. Type I subfamily.

Its subcellular location is the secreted. The protein localises to the nematocyst. In terms of biological role, binds specifically to voltage-gated sodium channels (Nav) (site 3), thereby delaying their inactivation during signal transduction. Thus it may strongly stimulate mammalian cardiac muscle contraction. The protein is Delta-actitoxin-Axm1h of Anthopleura xanthogrammica (Giant green sea anemone).